The sequence spans 419 residues: Probable G-protein coupled receptor 63 (419 aa).

Topologically, residues 1–81 (MVFSAVLTAF…AFKSLNLPLQ (81 aa)) are extracellular. 3 N-linked (GlcNAc...) asparagine glycosylation sites follow: N16, N28, and N62. Residues 82 to 104 (ITLSAIMIFILFVSFLGNLVVCL) form a helical membrane-spanning segment. Residues 105-115 (MVYQKAAMRSA) are Cytoplasmic-facing. The chain crosses the membrane as a helical span at residues 116 to 138 (INILLASLAFADMLLAVLNMPFA). Residues 139 to 157 (LVTILTTRWIFGKFFCRVS) lie on the Extracellular side of the membrane. A helical membrane pass occupies residues 158–177 (AMFFWLFVIEGVAILLIISI). Residues 178 to 196 (DRFLIIVQRQDKLNPYRAK) lie on the Cytoplasmic side of the membrane. A helical membrane pass occupies residues 197–216 (VLIAVSWATSFCVAFPLAVG). At 217–240 (NPDLQIPSRAPQCVFGYTTNPGYQ) the chain is on the extracellular side. The chain crosses the membrane as a helical span at residues 241–263 (AYVILISLISFFIPFLVILYSFM). At 264–315 (GILNTLRHNALRIHSYPEGICLSQASKLGLMSLQRPFQMSIDMGFKTRAFTT) the chain is on the cytoplasmic side. A helical transmembrane segment spans residues 316–338 (ILILFAVFIVCWAPFTTYSLVAT). At 339 to 352 (FSKHFYYQHNFFEI) the chain is on the extracellular side. A helical transmembrane segment spans residues 353-375 (STWLLWLCYLKSALNPLIYYWRI). The Cytoplasmic segment spans residues 376–419 (KKFHDACLDMMPKSFKFLPQLPGHTKRRIRPSAVYVCGEHRTVV).

It belongs to the G-protein coupled receptor 1 family. In terms of tissue distribution, expressed in brain; detected in the frontal cortex, with lower levels in the thalamus, caudate, hypothalamus and midbrain.

The protein resides in the cell membrane. Functionally, orphan receptor. May play a role in brain function. In Homo sapiens (Human), this protein is Probable G-protein coupled receptor 63 (GPR63).